Consider the following 208-residue polypeptide: Urease accessory protein UreG 1 (208 aa).

14–21 (GPVGSGKT) lines the GTP pocket.

The protein belongs to the SIMIBI class G3E GTPase family. UreG subfamily. As to quaternary structure, homodimer. UreD, UreF and UreG form a complex that acts as a GTP-hydrolysis-dependent molecular chaperone, activating the urease apoprotein by helping to assemble the nickel containing metallocenter of UreC. The UreE protein probably delivers the nickel.

Its subcellular location is the cytoplasm. Facilitates the functional incorporation of the urease nickel metallocenter. This process requires GTP hydrolysis, probably effectuated by UreG. The sequence is that of Urease accessory protein UreG 1 from Brucella ovis (strain ATCC 25840 / 63/290 / NCTC 10512).